The following is a 514-amino-acid chain: ATP synthase subunit alpha (514 aa).

An ATP-binding site is contributed by 170–177; that stretch reads GDRQTGKT.

It belongs to the ATPase alpha/beta chains family. In terms of assembly, F-type ATPases have 2 components, CF(1) - the catalytic core - and CF(0) - the membrane proton channel. CF(1) has five subunits: alpha(3), beta(3), gamma(1), delta(1), epsilon(1). CF(0) has three main subunits: a(1), b(2) and c(9-12). The alpha and beta chains form an alternating ring which encloses part of the gamma chain. CF(1) is attached to CF(0) by a central stalk formed by the gamma and epsilon chains, while a peripheral stalk is formed by the delta and b chains.

The protein resides in the cell inner membrane. The enzyme catalyses ATP + H2O + 4 H(+)(in) = ADP + phosphate + 5 H(+)(out). Its function is as follows. Produces ATP from ADP in the presence of a proton gradient across the membrane. The alpha chain is a regulatory subunit. This chain is ATP synthase subunit alpha, found in Psychrobacter sp. (strain PRwf-1).